Consider the following 255-residue polypeptide: 4-diphosphocytidyl-2-C-methyl-D-erythritol kinase (255 aa).

Lys-9 is an active-site residue. An ATP-binding site is contributed by 95–105 (PSQAGLGGGSS). Asp-137 is a catalytic residue.

This sequence belongs to the GHMP kinase family. IspE subfamily.

The enzyme catalyses 4-CDP-2-C-methyl-D-erythritol + ATP = 4-CDP-2-C-methyl-D-erythritol 2-phosphate + ADP + H(+). It functions in the pathway isoprenoid biosynthesis; isopentenyl diphosphate biosynthesis via DXP pathway; isopentenyl diphosphate from 1-deoxy-D-xylulose 5-phosphate: step 3/6. Catalyzes the phosphorylation of the position 2 hydroxy group of 4-diphosphocytidyl-2C-methyl-D-erythritol. The sequence is that of 4-diphosphocytidyl-2-C-methyl-D-erythritol kinase from Sulfurovum sp. (strain NBC37-1).